The chain runs to 230 residues: Transmembrane protein 221 (230 aa).

The next 4 membrane-spanning stretches (helical) occupy residues 12 to 32 (AMTLLGIPAAVLVALAAQLLF), 73 to 93 (ALAALAQVLGLSCLLLAALCG), 125 to 145 (LFCCGVSVYLAALAIYALLLF), and 147 to 167 (IEAGAAAASILGSGALILVAI). The interval 184–230 (RELSPPSFEDEPARPSEDSKSGCRAQPPQDEETETPIGAVTHQGSHF) is disordered. Over residues 194–204 (EPARPSEDSKS) the composition is skewed to basic and acidic residues.

It is found in the membrane. This chain is Transmembrane protein 221 (Tmem221), found in Mus musculus (Mouse).